We begin with the raw amino-acid sequence, 264 residues long: tRNA (guanine-N(7)-)-methyltransferase (264 aa).

The disordered stretch occupies residues 1-39 (MIHDDDPNAPGAPHDDATAAPASATRAAPAAGDDDDANP). Residues 18–31 (TAAPASATRAAPAA) are compositionally biased toward low complexity. Residues Glu-94, Glu-119, Asp-146, and Asp-169 each coordinate S-adenosyl-L-methionine. Residue Asp-169 is part of the active site. Substrate is bound by residues Lys-173, Asp-205, and 240-243 (TKFE).

This sequence belongs to the class I-like SAM-binding methyltransferase superfamily. TrmB family.

It catalyses the reaction guanosine(46) in tRNA + S-adenosyl-L-methionine = N(7)-methylguanosine(46) in tRNA + S-adenosyl-L-homocysteine. The protein operates within tRNA modification; N(7)-methylguanine-tRNA biosynthesis. In terms of biological role, catalyzes the formation of N(7)-methylguanine at position 46 (m7G46) in tRNA. The sequence is that of tRNA (guanine-N(7)-)-methyltransferase from Burkholderia mallei (strain ATCC 23344).